A 311-amino-acid chain; its full sequence is Mediator of RNA polymerase II transcription subunit 27 (311 aa).

It belongs to the Mediator complex subunit 27 family. As to quaternary structure, component of the Mediator complex.

It is found in the nucleus. Functionally, component of the Mediator complex, a coactivator involved in the regulated transcription of nearly all RNA polymerase II-dependent genes. Mediator functions as a bridge to convey information from gene-specific regulatory proteins to the basal RNA polymerase II transcription machinery. Mediator is recruited to promoters by direct interactions with regulatory proteins and serves as a scaffold for the assembly of a functional preinitiation complex with RNA polymerase II and the general transcription factors. Required for the development of dopaminergic amacrine cells in the retina. May also negatively regulate the development of rod photoreceptor cells. The polypeptide is Mediator of RNA polymerase II transcription subunit 27 (med27) (Danio rerio (Zebrafish)).